A 208-amino-acid polypeptide reads, in one-letter code: Small ribosomal subunit protein uS4 (208 aa).

One can recognise an S4 RNA-binding domain in the interval Arg-98–Asn-158.

The protein belongs to the universal ribosomal protein uS4 family. As to quaternary structure, part of the 30S ribosomal subunit. Contacts protein S5. The interaction surface between S4 and S5 is involved in control of translational fidelity.

Its function is as follows. One of the primary rRNA binding proteins, it binds directly to 16S rRNA where it nucleates assembly of the body of the 30S subunit. In terms of biological role, with S5 and S12 plays an important role in translational accuracy. In Geotalea uraniireducens (strain Rf4) (Geobacter uraniireducens), this protein is Small ribosomal subunit protein uS4.